The sequence spans 385 residues: Serine/threonine-protein kinase H2 (385 aa).

Residues 63 to 320 (YDIKALIGTG…AGQALDHPWV (258 aa)) form the Protein kinase domain. ATP is bound by residues 69–77 (IGTGSFSRV) and Lys-92. A disordered region spans residues 342 to 367 (QRASPHSQSPGSAQSSKSHYSHKSRH). The span at 344-359 (ASPHSQSPGSAQSSKS) shows a compositional bias: low complexity.

This sequence belongs to the protein kinase superfamily. CAMK Ser/Thr protein kinase family.

The enzyme catalyses L-seryl-[protein] + ATP = O-phospho-L-seryl-[protein] + ADP + H(+). It carries out the reaction L-threonyl-[protein] + ATP = O-phospho-L-threonyl-[protein] + ADP + H(+). In Homo sapiens (Human), this protein is Serine/threonine-protein kinase H2 (PSKH2).